The chain runs to 300 residues: UDP-N-acetylenolpyruvoylglucosamine reductase (300 aa).

The region spanning 30–194 is the FAD-binding PCMH-type domain; it reads KVGGPADFFA…LAAVFSLAAG (165 aa). Residue arginine 174 is part of the active site. Catalysis depends on serine 223, which acts as the Proton donor. Residue glutamate 293 is part of the active site.

It belongs to the MurB family. The cofactor is FAD.

The protein localises to the cytoplasm. The catalysed reaction is UDP-N-acetyl-alpha-D-muramate + NADP(+) = UDP-N-acetyl-3-O-(1-carboxyvinyl)-alpha-D-glucosamine + NADPH + H(+). Its pathway is cell wall biogenesis; peptidoglycan biosynthesis. Its function is as follows. Cell wall formation. The polypeptide is UDP-N-acetylenolpyruvoylglucosamine reductase (Geotalea uraniireducens (strain Rf4) (Geobacter uraniireducens)).